The following is a 200-amino-acid chain: Histone H1 (200 aa).

The segment covering 1–14 (MPPKKAPTTAKKAA) has biased composition (low complexity). 2 disordered regions span residues 1–20 (MPPKKAPTTAKKAASGPTHT) and 78–200 (DFIQ…NKKA). Residues 18-93 (THTSYRDMIK…GTSGPVKLAK (76 aa)) form the H15 domain. Residues 94–116 (KQAPAKPAPKKPATTTKTAAPKK) are compositionally biased toward low complexity. Positions 120 to 131 (KKADKAEKAEKP) are enriched in basic and acidic residues. The segment covering 159 to 185 (TAAPAVVDKPKVVSVTKSGRKTTTTAK) has biased composition (low complexity).

This sequence belongs to the histone H1/H5 family.

Its subcellular location is the nucleus. It is found in the chromosome. Functionally, could act as an H1-type linker histone. The protein is Histone H1 (hhoA) of Emericella nidulans (strain FGSC A4 / ATCC 38163 / CBS 112.46 / NRRL 194 / M139) (Aspergillus nidulans).